Here is a 169-residue protein sequence, read N- to C-terminus: Small ribosomal subunit protein uS5 (169 aa).

Residues 14–77 (LDDQVVAINR…AAAEKNLITV (64 aa)) enclose the S5 DRBM domain.

It belongs to the universal ribosomal protein uS5 family. In terms of assembly, part of the 30S ribosomal subunit. Contacts proteins S4 and S8.

Its function is as follows. With S4 and S12 plays an important role in translational accuracy. Functionally, located at the back of the 30S subunit body where it stabilizes the conformation of the head with respect to the body. This Limosilactobacillus reuteri (strain DSM 20016) (Lactobacillus reuteri) protein is Small ribosomal subunit protein uS5.